The primary structure comprises 117 residues: Large ribosomal subunit protein bL20 (117 aa).

It belongs to the bacterial ribosomal protein bL20 family.

Functionally, binds directly to 23S ribosomal RNA and is necessary for the in vitro assembly process of the 50S ribosomal subunit. It is not involved in the protein synthesizing functions of that subunit. The protein is Large ribosomal subunit protein bL20 of Carboxydothermus hydrogenoformans (strain ATCC BAA-161 / DSM 6008 / Z-2901).